Consider the following 359-residue polypeptide: Ras association domain-containing protein 7 (359 aa).

Positions valine 6 to proline 89 constitute a Ras-associating domain. The interval threonine 87–glutamate 123 is disordered. Positions proline 89–asparagine 99 are enriched in polar residues. Coiled coils occupy residues tryptophan 180–histidine 208 and alanine 242–isoleucine 301. Positions serine 339–arginine 359 are disordered.

In terms of assembly, interacts with MAP2K7 and GTP-bound NRAS. Polyubiquitinated and degraded by the proteasome upon prolonged stress stimuli.

The protein resides in the cytoplasm. The protein localises to the cytoskeleton. It localises to the microtubule organizing center. Its subcellular location is the centrosome. Its function is as follows. Negatively regulates stress-induced JNK activation and apoptosis by promoting MAP2K7 phosphorylation and inhibiting its ability to activate JNK. Following prolonged stress, anti-apoptotic effect stops because of degradation of RASSF7 protein via the ubiquitin-proteasome pathway. Required for the activation of AURKB and chromosomal congression during mitosis where it stimulates microtubule polymerization. In Mus musculus (Mouse), this protein is Ras association domain-containing protein 7 (Rassf7).